Here is a 331-residue protein sequence, read N- to C-terminus: Ketol-acid reductoisomerase (NADP(+)) (331 aa).

The KARI N-terminal Rossmann domain occupies alanine 2–threonine 182. NADP(+)-binding positions include tyrosine 25 to glutamine 28, serine 51, serine 53, and aspartate 83 to glutamine 86. Histidine 108 is an active-site residue. Glycine 134 serves as a coordination point for NADP(+). The KARI C-terminal knotted domain occupies threonine 183–threonine 328. Mg(2+)-binding residues include aspartate 191, glutamate 195, glutamate 227, and glutamate 231. A substrate-binding site is contributed by serine 252.

This sequence belongs to the ketol-acid reductoisomerase family. The cofactor is Mg(2+).

It catalyses the reaction (2R)-2,3-dihydroxy-3-methylbutanoate + NADP(+) = (2S)-2-acetolactate + NADPH + H(+). The catalysed reaction is (2R,3R)-2,3-dihydroxy-3-methylpentanoate + NADP(+) = (S)-2-ethyl-2-hydroxy-3-oxobutanoate + NADPH + H(+). It functions in the pathway amino-acid biosynthesis; L-isoleucine biosynthesis; L-isoleucine from 2-oxobutanoate: step 2/4. It participates in amino-acid biosynthesis; L-valine biosynthesis; L-valine from pyruvate: step 2/4. Involved in the biosynthesis of branched-chain amino acids (BCAA). Catalyzes an alkyl-migration followed by a ketol-acid reduction of (S)-2-acetolactate (S2AL) to yield (R)-2,3-dihydroxy-isovalerate. In the isomerase reaction, S2AL is rearranged via a Mg-dependent methyl migration to produce 3-hydroxy-3-methyl-2-ketobutyrate (HMKB). In the reductase reaction, this 2-ketoacid undergoes a metal-dependent reduction by NADPH to yield (R)-2,3-dihydroxy-isovalerate. In Acaryochloris marina (strain MBIC 11017), this protein is Ketol-acid reductoisomerase (NADP(+)).